Consider the following 126-residue polypeptide: Small ribosomal subunit protein uS13 (126 aa).

The disordered stretch occupies residues 91–126 (HRAGLPVRGQRTRTNSRTRRSAKRTVAGKKKAPSKK). The segment covering 100–126 (QRTRTNSRTRRSAKRTVAGKKKAPSKK) has biased composition (basic residues).

The protein belongs to the universal ribosomal protein uS13 family. Part of the 30S ribosomal subunit. Forms a loose heterodimer with protein S19. Forms two bridges to the 50S subunit in the 70S ribosome.

Functionally, located at the top of the head of the 30S subunit, it contacts several helices of the 16S rRNA. In the 70S ribosome it contacts the 23S rRNA (bridge B1a) and protein L5 of the 50S subunit (bridge B1b), connecting the 2 subunits; these bridges are implicated in subunit movement. Contacts the tRNAs in the A and P-sites. The polypeptide is Small ribosomal subunit protein uS13 (Acaryochloris marina (strain MBIC 11017)).